The chain runs to 371 residues: Queuine tRNA-ribosyltransferase (371 aa).

Catalysis depends on aspartate 90, which acts as the Nucleophile. Aspartate 90 functions as the Proton acceptor in the catalytic mechanism. Substrate-binding positions include 90-94 (DSGGF), serine 91, aspartate 144, glutamine 189, and glycine 215. Positions 246 to 252 (GVGTPEN) are RNA binding. Catalysis depends on aspartate 265, which acts as the Nucleophile. Residues 270–274 (TRNAR) form an RNA binding; important for wobble base 34 recognition region. 4 residues coordinate Zn(2+): cysteine 303, cysteine 305, cysteine 308, and histidine 334.

This sequence belongs to the queuine tRNA-ribosyltransferase family. Homodimer. Within each dimer, one monomer is responsible for RNA recognition and catalysis, while the other monomer binds to the replacement base PreQ1. Zn(2+) serves as cofactor.

The catalysed reaction is 7-aminomethyl-7-carbaguanine + guanosine(34) in tRNA = 7-aminomethyl-7-carbaguanosine(34) in tRNA + guanine. It functions in the pathway tRNA modification; tRNA-queuosine biosynthesis. In terms of biological role, catalyzes the base-exchange of a guanine (G) residue with the queuine precursor 7-aminomethyl-7-deazaguanine (PreQ1) at position 34 (anticodon wobble position) in tRNAs with GU(N) anticodons (tRNA-Asp, -Asn, -His and -Tyr). Catalysis occurs through a double-displacement mechanism. The nucleophile active site attacks the C1' of nucleotide 34 to detach the guanine base from the RNA, forming a covalent enzyme-RNA intermediate. The proton acceptor active site deprotonates the incoming PreQ1, allowing a nucleophilic attack on the C1' of the ribose to form the product. After dissociation, two additional enzymatic reactions on the tRNA convert PreQ1 to queuine (Q), resulting in the hypermodified nucleoside queuosine (7-(((4,5-cis-dihydroxy-2-cyclopenten-1-yl)amino)methyl)-7-deazaguanosine). This is Queuine tRNA-ribosyltransferase from Helicobacter pylori (strain ATCC 700392 / 26695) (Campylobacter pylori).